Here is a 393-residue protein sequence, read N- to C-terminus: Decapping nuclease dom-3 (393 aa).

The disordered stretch occupies residues 1–37 (MSHYGGNPRGNSSHQFGRKDFQQSDSKHIPKITGQPL). Over residues 17–28 (GRKDFQQSDSKH) the composition is skewed to basic and acidic residues. Substrate-binding positions include R74, E113, and 144–146 (WRG). Mg(2+) is bound by residues E205, E257, D259, E269, and L270. E257 serves as a coordination point for substrate. Positions 271 and 293 each coordinate substrate.

The protein belongs to the DXO/Dom3Z family. Mg(2+) is required as a cofactor.

The enzyme catalyses a 5'-end NAD(+)-phospho-ribonucleoside in mRNA + H2O = a 5'-end phospho-ribonucleoside in mRNA + NAD(+) + H(+). The catalysed reaction is a 5'-end (N(7)-methyl 5'-triphosphoguanosine)-ribonucleoside-ribonucleotide in mRNA + H2O = a (N(7)-methyl 5'-triphosphoguanosine)-nucleoside + a 5'-end phospho-ribonucleoside in mRNA + H(+). It catalyses the reaction a 5'-end triphospho-ribonucleoside in mRNA + H2O = a 5'-end phospho-ribonucleoside in mRNA + diphosphate + H(+). Decapping enzyme for NAD-capped RNAs: specifically hydrolyzes the nicotinamide adenine dinucleotide (NAD) cap from a subset of RNAs by removing the entire NAD moiety from the 5'-end of an NAD-capped RNA. The NAD-cap is present at the 5'-end of some RNAs and snoRNAs. In contrast to the canonical 5'-end N7 methylguanosine (m7G) cap, the NAD cap promotes mRNA decay. Also acts as a non-canonical decapping enzyme that removes the entire cap structure of m7G capped or incompletely capped RNAs and mediates their subsequent degradation. Specifically degrades pre-mRNAs with a defective 5'-end m7G cap and is part of a pre-mRNA capping quality control. Also possesses RNA 5'-pyrophosphohydrolase activity by hydrolyzing the 5'-end triphosphate to release pyrophosphates. The polypeptide is Decapping nuclease dom-3 (Caenorhabditis elegans).